Here is a 62-residue protein sequence, read N- to C-terminus: MTAPKCVTTTTYLVKTKEQPWWPDNAIRRWWISVAIVIFIGVCLVALMYFTQQQARNGSGSG.

Residues 30 to 50 traverse the membrane as a helical segment; that stretch reads WWISVAIVIFIGVCLVALMYF.

It localises to the host membrane. The polypeptide is Protein UL148D (UL148D) (Human cytomegalovirus (strain Merlin) (HHV-5)).